Consider the following 178-residue polypeptide: Cytochrome b6-f complex iron-sulfur subunit (178 aa).

The chain crosses the membrane as a helical span at residues 20–42 (LLTFGTATGVALGALYPVANFFM). One can recognise a Rieske domain in the interval 71 to 161 (NHPAGDRSLV…IDIDDDNVLV (91 aa)). Cys107, His109, Cys125, and His128 together coordinate [2Fe-2S] cluster. An intrachain disulfide couples Cys112 to Cys127.

It belongs to the Rieske iron-sulfur protein family. As to quaternary structure, the 4 large subunits of the cytochrome b6-f complex are cytochrome b6, subunit IV (17 kDa polypeptide, PetD), cytochrome f and the Rieske protein, while the 4 small subunits are PetG, PetL, PetM and PetN. The complex functions as a dimer. [2Fe-2S] cluster is required as a cofactor.

It is found in the cellular thylakoid membrane. The catalysed reaction is 2 oxidized [plastocyanin] + a plastoquinol + 2 H(+)(in) = 2 reduced [plastocyanin] + a plastoquinone + 4 H(+)(out). Its function is as follows. Component of the cytochrome b6-f complex, which mediates electron transfer between photosystem II (PSII) and photosystem I (PSI), cyclic electron flow around PSI, and state transitions. The chain is Cytochrome b6-f complex iron-sulfur subunit from Prochlorococcus marinus (strain SARG / CCMP1375 / SS120).